The chain runs to 445 residues: 3-phosphoshikimate 1-carboxyvinyltransferase (445 aa).

The 3-phosphoshikimate site is built by K25, S26, and R30. A phosphoenolpyruvate-binding site is contributed by K25. G98 and R126 together coordinate phosphoenolpyruvate. Residues S171, Q173, D324, and K351 each contribute to the 3-phosphoshikimate site. Q173 is a binding site for phosphoenolpyruvate. D324 (proton acceptor) is an active-site residue. R355 and R398 together coordinate phosphoenolpyruvate.

It belongs to the EPSP synthase family. Monomer.

It localises to the cytoplasm. It carries out the reaction 3-phosphoshikimate + phosphoenolpyruvate = 5-O-(1-carboxyvinyl)-3-phosphoshikimate + phosphate. It participates in metabolic intermediate biosynthesis; chorismate biosynthesis; chorismate from D-erythrose 4-phosphate and phosphoenolpyruvate: step 6/7. Functionally, catalyzes the transfer of the enolpyruvyl moiety of phosphoenolpyruvate (PEP) to the 5-hydroxyl of shikimate-3-phosphate (S3P) to produce enolpyruvyl shikimate-3-phosphate and inorganic phosphate. The sequence is that of 3-phosphoshikimate 1-carboxyvinyltransferase from Hydrogenovibrio crunogenus (strain DSM 25203 / XCL-2) (Thiomicrospira crunogena).